The primary structure comprises 477 residues: Bifunctional protein HldE (477 aa).

The ribokinase stretch occupies residues 1–318 (MKVTLPEFER…ENAVRGRADT (318 aa)). Lysine 179 is subject to N6-acetyllysine. An ATP-binding site is contributed by 195–198 (NLSE). Residue aspartate 264 is part of the active site. Positions 344-477 (MTNGVFDILH…IKKIQLDKKG (134 aa)) are cytidylyltransferase.

The protein in the N-terminal section; belongs to the carbohydrate kinase PfkB family. This sequence in the C-terminal section; belongs to the cytidylyltransferase family. In terms of assembly, homodimer.

The catalysed reaction is D-glycero-beta-D-manno-heptose 7-phosphate + ATP = D-glycero-beta-D-manno-heptose 1,7-bisphosphate + ADP + H(+). It catalyses the reaction D-glycero-beta-D-manno-heptose 1-phosphate + ATP + H(+) = ADP-D-glycero-beta-D-manno-heptose + diphosphate. The protein operates within nucleotide-sugar biosynthesis; ADP-L-glycero-beta-D-manno-heptose biosynthesis; ADP-L-glycero-beta-D-manno-heptose from D-glycero-beta-D-manno-heptose 7-phosphate: step 1/4. It functions in the pathway nucleotide-sugar biosynthesis; ADP-L-glycero-beta-D-manno-heptose biosynthesis; ADP-L-glycero-beta-D-manno-heptose from D-glycero-beta-D-manno-heptose 7-phosphate: step 3/4. Functionally, catalyzes the phosphorylation of D-glycero-D-manno-heptose 7-phosphate at the C-1 position to selectively form D-glycero-beta-D-manno-heptose-1,7-bisphosphate. Its function is as follows. Catalyzes the ADP transfer from ATP to D-glycero-beta-D-manno-heptose 1-phosphate, yielding ADP-D-glycero-beta-D-manno-heptose. The sequence is that of Bifunctional protein HldE from Escherichia coli O81 (strain ED1a).